Consider the following 365-residue polypeptide: Undecaprenyl-phosphate alpha-N-acetylglucosaminyl 1-phosphate transferase (365 aa).

10 helical membrane passes run L3 to V23, G45 to I65, I99 to L119, V132 to F152, G157 to L177, L187 to L207, V213 to Q233, I242 to M262, Q293 to E313, and L315 to G335.

The protein belongs to the glycosyltransferase 4 family. WecA subfamily. Mg(2+) is required as a cofactor. The cofactor is Mn(2+).

The protein resides in the cell inner membrane. The catalysed reaction is di-trans,octa-cis-undecaprenyl phosphate + UDP-N-acetyl-alpha-D-glucosamine = N-acetyl-alpha-D-glucosaminyl-di-trans,octa-cis-undecaprenyl diphosphate + UMP. It functions in the pathway bacterial outer membrane biogenesis; LPS O-antigen biosynthesis. It participates in bacterial outer membrane biogenesis; enterobacterial common antigen biosynthesis. Catalyzes the transfer of the GlcNAc-1-phosphate moiety from UDP-GlcNAc onto the carrier lipid undecaprenyl phosphate (C55-P), yielding GlcNAc-pyrophosphoryl-undecaprenyl (GlcNAc-PP-C55). This is Undecaprenyl-phosphate alpha-N-acetylglucosaminyl 1-phosphate transferase from Yersinia pestis.